We begin with the raw amino-acid sequence, 578 residues long: Lysine--tRNA ligase (578 aa).

Mg(2+) is bound by residues Glu414 and Glu421.

Belongs to the class-II aminoacyl-tRNA synthetase family. As to quaternary structure, homodimer. Mg(2+) is required as a cofactor.

Its subcellular location is the cytoplasm. The catalysed reaction is tRNA(Lys) + L-lysine + ATP = L-lysyl-tRNA(Lys) + AMP + diphosphate. This is Lysine--tRNA ligase from Porphyromonas gingivalis (strain ATCC BAA-308 / W83).